We begin with the raw amino-acid sequence, 189 residues long: Elongation factor P (189 aa).

Belongs to the elongation factor P family.

The protein localises to the cytoplasm. It functions in the pathway protein biosynthesis; polypeptide chain elongation. In terms of biological role, involved in peptide bond synthesis. Stimulates efficient translation and peptide-bond synthesis on native or reconstituted 70S ribosomes in vitro. Probably functions indirectly by altering the affinity of the ribosome for aminoacyl-tRNA, thus increasing their reactivity as acceptors for peptidyl transferase. In Xanthobacter autotrophicus (strain ATCC BAA-1158 / Py2), this protein is Elongation factor P.